The sequence spans 357 residues: MSQVRGSRVAVIGATGYGGLQTIRLLEDHPHLHVTYLGGERSAGRRWSELCPFLPILDDPEVQSPDPDKIAEFADYAVLSLPNGLACQLAPQLLKRNVRVVDLSADFRYRSLEQWKQVYVHEAQNLNRDDVQLCREAVYGLPEWKGPEIAVANLVAAPGCFPTASLLPLLPFLKQGLIENDGLIIDAKTGTSGGGRVAKEQFLLAEASESIMPYGVVGHRHTSEIEQLASEVAGQPIELQFTPHLVPMVRGLLATVYGRLRDPGLTAEDCTTVLKAVYRHHPCIDVLPVGTYPATKWVKYSNKAVLSVQVDNRNSRLVLMSAVDNLIKGQAGQGVQCLNLMAGLPPTTGMSLLTFYP.

The active site involves C160.

The protein belongs to the NAGSA dehydrogenase family. Type 1 subfamily.

It localises to the cytoplasm. It catalyses the reaction N-acetyl-L-glutamate 5-semialdehyde + phosphate + NADP(+) = N-acetyl-L-glutamyl 5-phosphate + NADPH + H(+). Its pathway is amino-acid biosynthesis; L-arginine biosynthesis; N(2)-acetyl-L-ornithine from L-glutamate: step 3/4. Its function is as follows. Catalyzes the NADPH-dependent reduction of N-acetyl-5-glutamyl phosphate to yield N-acetyl-L-glutamate 5-semialdehyde. This is N-acetyl-gamma-glutamyl-phosphate reductase from Prochlorococcus marinus (strain MIT 9313).